The chain runs to 298 residues: HTH-type transcriptional regulator ArgP (298 aa).

The HTH lysR-type domain maps to Leu4–Thr60. Positions Phe21–Lys40 form a DNA-binding region, H-T-H motif.

Belongs to the LysR transcriptional regulatory family. In terms of assembly, homodimer.

Functionally, controls the transcription of genes involved in arginine and lysine metabolism. This is HTH-type transcriptional regulator ArgP from Vibrio vulnificus (strain CMCP6).